A 118-amino-acid chain; its full sequence is Large ribosomal subunit protein uL18 (118 aa).

This sequence belongs to the universal ribosomal protein uL18 family. In terms of assembly, part of the 50S ribosomal subunit; part of the 5S rRNA/L5/L18/L25 subcomplex. Contacts the 5S and 23S rRNAs.

Its function is as follows. This is one of the proteins that bind and probably mediate the attachment of the 5S RNA into the large ribosomal subunit, where it forms part of the central protuberance. The chain is Large ribosomal subunit protein uL18 from Ligilactobacillus salivarius (strain UCC118) (Lactobacillus salivarius).